A 591-amino-acid chain; its full sequence is L-fucose isomerase (591 aa).

Residues E337 and D361 each act as proton acceptor in the active site. The Mn(2+) site is built by E337, D361, and H528.

This sequence belongs to the L-fucose isomerase family. As to quaternary structure, homohexamer. The cofactor is Mn(2+).

The protein resides in the cytoplasm. The enzyme catalyses L-fucose = L-fuculose. Its pathway is carbohydrate degradation; L-fucose degradation; L-lactaldehyde and glycerone phosphate from L-fucose: step 1/3. Functionally, converts the aldose L-fucose into the corresponding ketose L-fuculose. This Citrobacter koseri (strain ATCC BAA-895 / CDC 4225-83 / SGSC4696) protein is L-fucose isomerase.